We begin with the raw amino-acid sequence, 455 residues long: tRNA modification GTPase MnmE (455 aa).

The (6S)-5-formyl-5,6,7,8-tetrahydrofolate site is built by Arg-24, Glu-86, and Arg-125. Residues 220–376 (GLTVAIIGRP…LETAILETVQ (157 aa)) enclose the TrmE-type G domain. K(+) is bound at residue Asn-230. GTP is bound by residues 230–235 (NVGKSS), 249–255 (TDLPGTT), and 274–277 (DTAG). Ser-234 contributes to the Mg(2+) binding site. The K(+) site is built by Thr-249, Leu-251, and Thr-254. Position 255 (Thr-255) interacts with Mg(2+). Lys-455 provides a ligand contact to (6S)-5-formyl-5,6,7,8-tetrahydrofolate.

The protein belongs to the TRAFAC class TrmE-Era-EngA-EngB-Septin-like GTPase superfamily. TrmE GTPase family. As to quaternary structure, homodimer. Heterotetramer of two MnmE and two MnmG subunits. The cofactor is K(+).

It localises to the cytoplasm. In terms of biological role, exhibits a very high intrinsic GTPase hydrolysis rate. Involved in the addition of a carboxymethylaminomethyl (cmnm) group at the wobble position (U34) of certain tRNAs, forming tRNA-cmnm(5)s(2)U34. This is tRNA modification GTPase MnmE from Acaryochloris marina (strain MBIC 11017).